The sequence spans 277 residues: Large ribosomal subunit protein uL2 (277 aa).

Residues 219–277 are disordered; it reads TVRGSVMNPNDHPHGGGEGRSPIGHPSPRTPWGKPALGYKTRKNKKYSDRFIVKRRHDK.

Belongs to the universal ribosomal protein uL2 family. Part of the 50S ribosomal subunit. Forms a bridge to the 30S subunit in the 70S ribosome.

One of the primary rRNA binding proteins. Required for association of the 30S and 50S subunits to form the 70S ribosome, for tRNA binding and peptide bond formation. It has been suggested to have peptidyltransferase activity; this is somewhat controversial. Makes several contacts with the 16S rRNA in the 70S ribosome. The protein is Large ribosomal subunit protein uL2 of Clostridium botulinum (strain ATCC 19397 / Type A).